The following is a 315-amino-acid chain: Ribose-phosphate pyrophosphokinase (315 aa).

Residues Asp-40–Glu-42 and Arg-99–Gln-100 each bind ATP. Positions 133 and 175 each coordinate Mg(2+). Lys-198 is an active-site residue. Residues Arg-200, Asp-224, and Asp-228–Ser-232 each bind D-ribose 5-phosphate.

The protein belongs to the ribose-phosphate pyrophosphokinase family. Class I subfamily. As to quaternary structure, homohexamer. Requires Mg(2+) as cofactor.

The protein localises to the cytoplasm. It catalyses the reaction D-ribose 5-phosphate + ATP = 5-phospho-alpha-D-ribose 1-diphosphate + AMP + H(+). It participates in metabolic intermediate biosynthesis; 5-phospho-alpha-D-ribose 1-diphosphate biosynthesis; 5-phospho-alpha-D-ribose 1-diphosphate from D-ribose 5-phosphate (route I): step 1/1. Its function is as follows. Involved in the biosynthesis of the central metabolite phospho-alpha-D-ribosyl-1-pyrophosphate (PRPP) via the transfer of pyrophosphoryl group from ATP to 1-hydroxyl of ribose-5-phosphate (Rib-5-P). The polypeptide is Ribose-phosphate pyrophosphokinase (Thermotoga maritima (strain ATCC 43589 / DSM 3109 / JCM 10099 / NBRC 100826 / MSB8)).